A 120-amino-acid polypeptide reads, in one-letter code: Chaperonin GroEL (120 aa).

23-27 (DGTTT) is a binding site for ATP.

It belongs to the chaperonin (HSP60) family. In terms of assembly, forms a cylinder of 14 subunits composed of two heptameric rings stacked back-to-back. Interacts with the co-chaperonin GroES.

The protein localises to the cytoplasm. It carries out the reaction ATP + H2O + a folded polypeptide = ADP + phosphate + an unfolded polypeptide.. Functionally, together with its co-chaperonin GroES, plays an essential role in assisting protein folding. The GroEL-GroES system forms a nano-cage that allows encapsulation of the non-native substrate proteins and provides a physical environment optimized to promote and accelerate protein folding. In Mycobacterium gordonae, this protein is Chaperonin GroEL.